The sequence spans 428 residues: 3-phosphoshikimate 1-carboxyvinyltransferase (428 aa).

3-phosphoshikimate contacts are provided by Lys-21, Ser-22, and Arg-26. Residue Lys-21 participates in phosphoenolpyruvate binding. Residues Gly-94 and Arg-122 each contribute to the phosphoenolpyruvate site. Ser-166, Ser-167, Gln-168, Ser-194, Asp-306, and Lys-333 together coordinate 3-phosphoshikimate. Gln-168 lines the phosphoenolpyruvate pocket. The Proton acceptor role is filled by Asp-306. Residues Arg-337, Arg-379, and Lys-405 each coordinate phosphoenolpyruvate.

This sequence belongs to the EPSP synthase family. In terms of assembly, monomer.

Its subcellular location is the cytoplasm. The catalysed reaction is 3-phosphoshikimate + phosphoenolpyruvate = 5-O-(1-carboxyvinyl)-3-phosphoshikimate + phosphate. It participates in metabolic intermediate biosynthesis; chorismate biosynthesis; chorismate from D-erythrose 4-phosphate and phosphoenolpyruvate: step 6/7. In terms of biological role, catalyzes the transfer of the enolpyruvyl moiety of phosphoenolpyruvate (PEP) to the 5-hydroxyl of shikimate-3-phosphate (S3P) to produce enolpyruvyl shikimate-3-phosphate and inorganic phosphate. In Clostridium acetobutylicum (strain ATCC 824 / DSM 792 / JCM 1419 / IAM 19013 / LMG 5710 / NBRC 13948 / NRRL B-527 / VKM B-1787 / 2291 / W), this protein is 3-phosphoshikimate 1-carboxyvinyltransferase.